We begin with the raw amino-acid sequence, 396 residues long: Adenylyltransferase and sulfurtransferase UBA4 (396 aa).

Residues Gly51, Asp72, 79–83 (SNLHR), Lys95, and 139–140 (DG) each bind ATP. Residues Cys180 and Cys183 each contribute to the Zn(2+) site. Cys197 (glycyl thioester intermediate; for adenylyltransferase activity) is an active-site residue. Positions 257 and 260 each coordinate Zn(2+). A Rhodanese domain is found at 305 to 394 (VSTKHILLDV…WAKNVDEKFP (90 aa)). Cys355 functions as the Cysteine persulfide intermediate; for sulfurtransferase activity in the catalytic mechanism.

The protein in the N-terminal section; belongs to the HesA/MoeB/ThiF family. UBA4 subfamily. Zn(2+) serves as cofactor.

It localises to the cytoplasm. It is found in the cytosol. It functions in the pathway tRNA modification; 5-methoxycarbonylmethyl-2-thiouridine-tRNA biosynthesis. Functionally, plays a central role in 2-thiolation of mcm(5)S(2)U at tRNA wobble positions of cytosolic tRNA(Lys), tRNA(Glu) and tRNA(Gln). Acts by mediating the C-terminal thiocarboxylation of sulfur carrier URM1. Its N-terminus first activates URM1 as acyl-adenylate (-COAMP), then the persulfide sulfur on the catalytic cysteine is transferred to URM1 to form thiocarboxylation (-COSH) of its C-terminus. The reaction probably involves hydrogen sulfide that is generated from the persulfide intermediate and that acts as a nucleophile towards URM1. Subsequently, a transient disulfide bond is formed. Does not use thiosulfate as sulfur donor; NFS1 probably acting as a sulfur donor for thiocarboxylation reactions. Prior mcm(5) tRNA modification by the elongator complex is required for 2-thiolation. May also be involved in protein urmylation. This Yarrowia lipolytica (strain CLIB 122 / E 150) (Yeast) protein is Adenylyltransferase and sulfurtransferase UBA4.